The primary structure comprises 125 residues: Histone H1-like protein Hc1 (125 aa).

The segment at Thr-98–Lys-125 is disordered. Basic residues predominate over residues Ala-100–Lys-125.

The protein belongs to the histone H1/H5 family. HCT subfamily.

Functionally, might have a role analogous to that of eukaryotic histone proteins. The protein is Histone H1-like protein Hc1 (hctA) of Chlamydia trachomatis serovar D (strain ATCC VR-885 / DSM 19411 / UW-3/Cx).